Reading from the N-terminus, the 536-residue chain is Chaperonin GroEL (536 aa).

Residues 30-33 (TLGP), 86-90 (DGTTT), G414, and D494 contribute to the ATP site.

This sequence belongs to the chaperonin (HSP60) family. Forms a cylinder of 14 subunits composed of two heptameric rings stacked back-to-back. Interacts with the co-chaperonin GroES.

The protein localises to the cytoplasm. The catalysed reaction is ATP + H2O + a folded polypeptide = ADP + phosphate + an unfolded polypeptide.. Together with its co-chaperonin GroES, plays an essential role in assisting protein folding. The GroEL-GroES system forms a nano-cage that allows encapsulation of the non-native substrate proteins and provides a physical environment optimized to promote and accelerate protein folding. The sequence is that of Chaperonin GroEL from Methanosarcina barkeri (strain Fusaro / DSM 804).